A 559-amino-acid chain; its full sequence is Suppressor of tumorigenicity 7 protein-like (559 aa).

3 consecutive transmembrane segments (helical) span residues glycine 39–leucine 59, phenylalanine 83–tryptophan 103, and leucine 513–leucine 533.

The protein belongs to the ST7 family. As to expression, ubiquitously expressed.

The protein resides in the membrane. The sequence is that of Suppressor of tumorigenicity 7 protein-like (St7l) from Mus musculus (Mouse).